The chain runs to 515 residues: Arabinose import ATP-binding protein AraG 2 (515 aa).

The tract at residues 1–22 (MTMQTMTAASGHDAEAGTPPDG) is disordered. ABC transporter domains lie at 25-260 (LALD…MVGR) and 260-511 (RSIE…LIKL). An ATP-binding site is contributed by 57-64 (GENGAGKS).

This sequence belongs to the ABC transporter superfamily. Arabinose importer (TC 3.A.1.2.2) family. In terms of assembly, the complex is composed of two ATP-binding proteins (AraG), two transmembrane proteins (AraH) and a solute-binding protein (AraF).

It is found in the cell inner membrane. It catalyses the reaction L-arabinose(out) + ATP + H2O = L-arabinose(in) + ADP + phosphate + H(+). Its function is as follows. Part of the ABC transporter complex AraFGH involved in arabinose import. Responsible for energy coupling to the transport system. In Burkholderia cenocepacia (strain HI2424), this protein is Arabinose import ATP-binding protein AraG 2.